A 331-amino-acid polypeptide reads, in one-letter code: MSGRNRGPPPPSMKGGSYSGLQAPVHQPPFVRGLGGGPVPPPPHPSMIDDSREPQFRVDARGLPPQFSILEDRLAAQNQDVQGLLADNQRLAATHVALKQELEVAQHELQRIMHYIDSLRAEEEIMMREMYDKSMRSEMELREVDAMRAEIQKIRADIKEFTSGRQELTSQVHLMTQDLARLTADLQQIPTLTAEIENTKQELQRARAAIDYEKKGYAENYEHGKIMEHKLVAMARELEKLRAEIANSETSAYANGPVGNPGGVAYGGGYGNPEAGYPVNPYQPNYTMNPAQTGVVGYYPPPYGPQAAWAGGYDPQQQQQQQPPPQGQGHR.

A disordered region spans residues 1–51; it reads MSGRNRGPPPPSMKGGSYSGLQAPVHQPPFVRGLGGGPVPPPPHPSMIDDS. Residues 69–252 adopt a coiled-coil conformation; that stretch reads ILEDRLAAQN…AEIANSETSA (184 aa). The segment covering 306–321 has biased composition (low complexity); sequence QAAWAGGYDPQQQQQQ. A disordered region spans residues 306 to 331; that stretch reads QAAWAGGYDPQQQQQQQPPPQGQGHR. Positions 322 to 331 are enriched in pro residues; that stretch reads QPPPQGQGHR.

Belongs to the FLX family. As to quaternary structure, interacts with FRI.

In terms of biological role, has no transcriptional activation activity. The protein is Protein FLX-like 1 (FLXL1) of Arabidopsis thaliana (Mouse-ear cress).